Reading from the N-terminus, the 403-residue chain is tRNA pseudouridine synthase D (403 aa).

Over residues Met-1 to Ile-10 the composition is skewed to basic and acidic residues. Residues Met-1–Gln-24 form a disordered region. The active-site Nucleophile is Asp-92. The TRUD domain maps to Gly-192–Leu-354. The interval Ala-217–Asn-240 is disordered.

Belongs to the pseudouridine synthase TruD family.

The enzyme catalyses uridine(13) in tRNA = pseudouridine(13) in tRNA. Responsible for synthesis of pseudouridine from uracil-13 in transfer RNAs. This Psychrobacter arcticus (strain DSM 17307 / VKM B-2377 / 273-4) protein is tRNA pseudouridine synthase D.